A 471-amino-acid chain; its full sequence is Glutamate--tRNA ligase 2 (471 aa).

The 'HIGH' region signature appears at 15-25; sequence PSPTGYLHIGG. The short motif at 243–247 is the 'KMSKS' region element; that stretch reads KLSKR. Lys-246 provides a ligand contact to ATP.

Belongs to the class-I aminoacyl-tRNA synthetase family. Glutamate--tRNA ligase type 1 subfamily. Monomer.

Its subcellular location is the cytoplasm. The catalysed reaction is tRNA(Glu) + L-glutamate + ATP = L-glutamyl-tRNA(Glu) + AMP + diphosphate. Its function is as follows. Catalyzes the attachment of glutamate to tRNA(Glu) in a two-step reaction: glutamate is first activated by ATP to form Glu-AMP and then transferred to the acceptor end of tRNA(Glu). The sequence is that of Glutamate--tRNA ligase 2 from Cereibacter sphaeroides (strain ATCC 17025 / ATH 2.4.3) (Rhodobacter sphaeroides).